The primary structure comprises 449 residues: Packaging protein 1 (449 aa).

The segment covering 1–10 (MESRGKHRLK) has biased composition (basic residues). The disordered stretch occupies residues 1–64 (MESRGKHRLK…SSNSILHCPP (64 aa)). Residues 11–25 (KNGESKENLGEHEQA) show a composition bias toward basic and acidic residues. The span at 35-59 (SADSLSSPVAEPNFSSPGGRSSNSI) shows a compositional bias: polar residues. 168–175 (GPTGSGKS) is a binding site for ATP. A DNA-binding region spans residues 437–449 (TAYSKKCDKLANK).

The protein belongs to the adenoviridae packaging protein 1 family. As to quaternary structure, homodimer. Part of a genome packaging complex composed of packaging proteins 1, 2 and 3; this complex specifically binds to the packaging sequence on the left end of viral genomic DNA and performs packaging of the viral genome. Interacts with protein 33K.

Its subcellular location is the virion. The protein localises to the host nucleus. The protein resides in the host nucleoplasm. It localises to the host nucleolus. Component of the packaging machinery which encapsidates the viral DNA into preformed capsids and transcriptional activator of the viral major late promoter (MLP). Binds, along with packaging proteins 2 and 3, to the specific packaging sequence on the left end of viral genomic DNA and displays ATPase activity thereby providing the power stroke of the packaging machinery. The activity of packaging protein IVa2 is stimulated by protein 33K which acts as a terminase. May be the protein that pumps DNA into the capsid powered by ATP hydrolysis. Specifically binds to the 5'-CG-3' nucleotides of the repeats making up the packaging sequence. Component of the DEF-A and DEF-B transcription factors that bind downstream elements of the major late promoter (MLP), and stimulate transcription from the MLP after initiation of viral DNA replication. DEF-A is a heterodimer packaging proteins 1 and 2 and DEF-B is a homodimer of packaging protein 1. This Mus musculus (Mouse) protein is Packaging protein 1.